The chain runs to 156 residues: Small ribosomal subunit protein uS7 (156 aa).

The protein belongs to the universal ribosomal protein uS7 family. Part of the 30S ribosomal subunit. Contacts proteins S9 and S11.

Its function is as follows. One of the primary rRNA binding proteins, it binds directly to 16S rRNA where it nucleates assembly of the head domain of the 30S subunit. Is located at the subunit interface close to the decoding center, probably blocks exit of the E-site tRNA. This Azorhizobium caulinodans (strain ATCC 43989 / DSM 5975 / JCM 20966 / LMG 6465 / NBRC 14845 / NCIMB 13405 / ORS 571) protein is Small ribosomal subunit protein uS7.